We begin with the raw amino-acid sequence, 216 residues long: uncharacterized protein (216 aa).

This is an uncharacterized protein from Escherichia coli (strain K12).